An 89-amino-acid polypeptide reads, in one-letter code: Small ribosomal subunit protein uS15 (89 aa).

It belongs to the universal ribosomal protein uS15 family. Part of the 30S ribosomal subunit. Forms a bridge to the 50S subunit in the 70S ribosome, contacting the 23S rRNA.

Its function is as follows. One of the primary rRNA binding proteins, it binds directly to 16S rRNA where it helps nucleate assembly of the platform of the 30S subunit by binding and bridging several RNA helices of the 16S rRNA. Forms an intersubunit bridge (bridge B4) with the 23S rRNA of the 50S subunit in the ribosome. The polypeptide is Small ribosomal subunit protein uS15 (Hamiltonella defensa subsp. Acyrthosiphon pisum (strain 5AT)).